A 383-amino-acid chain; its full sequence is Presenilin-associated rhomboid-like protein A, mitochondrial (383 aa).

The N-terminal 37 residues, 1-37, are a transit peptide targeting the mitochondrion; it reads MAWRSCFMKWTQINSINASSLCPKSTRLNIHPQQRCG. The interval 35–75 is disordered; it reads RCGFRKTERPSESKKGVQETEAEAGGHNRAVPPKPVPPLPP. The Mitochondrial matrix segment spans residues 38–83; sequence FRKTERPSESKKGVQETEAEAGGHNRAVPPKPVPPLPPRRPHQLFR. The segment covering 39-52 has biased composition (basic and acidic residues); it reads RKTERPSESKKGVQ. Positions 66-75 are enriched in pro residues; it reads PPKPVPPLPP. The chain crosses the membrane as a helical span at residues 84–104; it reads PLVFTVGFTGCSFGAAAILQY. Topologically, residues 105–168 are mitochondrial intermembrane; the sequence is ESVKSRVQLA…FWSGLSEGQK (64 aa). Residues 169–189 traverse the membrane as a helical segment; sequence TVTGIIALNTVVLCCWRVPAM. At 190–219 the chain is on the mitochondrial matrix side; it reads QRFLVKYFTSNPASKTRCLPMVLSSFSHYS. The helical transmembrane segment at 220–240 threads the bilayer; it reads VIHMVVNMYVLWTFSSSIVSL. Residues 241–245 lie on the Mitochondrial intermembrane side of the membrane; that stretch reads LGREQ. A helical membrane pass occupies residues 246 to 266; it reads FLALYLSGGVISTFVSYVFKT. Residues 267-271 are Mitochondrial matrix-facing; that stretch reads ATGRL. The chain crosses the membrane as a helical span at residues 272–292; that stretch reads GPSLGASGSIMTVLAAVCTKI. Serine 278 functions as the Nucleophile in the catalytic mechanism. Residues 293–298 lie on the Mitochondrial intermembrane side of the membrane; sequence PEAKLG. A helical membrane pass occupies residues 299–319; it reads IVLLPVISFSAGNALKALVAL. The Mitochondrial matrix portion of the chain corresponds to 320–334; sequence DIAGLVLGWRFFDHA. Residues 335–355 form a helical membrane-spanning segment; that stretch reads AHLGGALFGVWYIGYGHELIW. Histidine 336 is a catalytic residue. The Mitochondrial intermembrane portion of the chain corresponds to 356–383; it reads RKREPLIKFWHELRNMSPGRPGPGGGGG.

This sequence belongs to the peptidase S54 family.

It is found in the mitochondrion inner membrane. The catalysed reaction is Cleaves type-1 transmembrane domains using a catalytic dyad composed of serine and histidine that are contributed by different transmembrane domains.. Its function is as follows. Required for the control of apoptosis during postnatal growth. Essential for proteolytic processing of an antiapoptotic form of opa1 which prevents the release of mitochondrial cytochrome c in response to intrinsic apoptotic signals. The sequence is that of Presenilin-associated rhomboid-like protein A, mitochondrial (parla) from Danio rerio (Zebrafish).